Here is a 171-residue protein sequence, read N- to C-terminus: S-ribosylhomocysteine lyase (171 aa).

Residues His54, His58, and Cys128 each coordinate Fe cation.

Belongs to the LuxS family. As to quaternary structure, homodimer. Fe cation is required as a cofactor.

It catalyses the reaction S-(5-deoxy-D-ribos-5-yl)-L-homocysteine = (S)-4,5-dihydroxypentane-2,3-dione + L-homocysteine. Its function is as follows. Involved in the synthesis of autoinducer 2 (AI-2) which is secreted by bacteria and is used to communicate both the cell density and the metabolic potential of the environment. The regulation of gene expression in response to changes in cell density is called quorum sensing. Catalyzes the transformation of S-ribosylhomocysteine (RHC) to homocysteine (HC) and 4,5-dihydroxy-2,3-pentadione (DPD). The polypeptide is S-ribosylhomocysteine lyase (Escherichia coli O81 (strain ED1a)).